The following is an 891-amino-acid chain: DNA mismatch repair protein MutS (891 aa).

617–624 (GPNMSGKS) contributes to the ATP binding site. The span at 805–827 (REKIEEEEPKTKDTKRGPSEKVK) shows a compositional bias: basic and acidic residues. Residues 805-840 (REKIEEEEPKTKDTKRGPSEKVKNASPTLPRDEKGR) are disordered.

Belongs to the DNA mismatch repair MutS family.

This protein is involved in the repair of mismatches in DNA. It is possible that it carries out the mismatch recognition step. This protein has a weak ATPase activity. The sequence is that of DNA mismatch repair protein MutS from Porphyromonas gingivalis (strain ATCC BAA-308 / W83).